We begin with the raw amino-acid sequence, 914 residues long: Zinc finger protein 717 (914 aa).

A KRAB domain is found at 22 to 93 (VSFEEVAVHF…EETPNLRLSA (72 aa)). The C2H2-type 1; degenerate zinc finger occupies 209-231 (FQCNEQGKTFNTEAMFFIHKRVH). The C2H2-type 2; degenerate zinc-finger motif lies at 266–277 (RKSDFTKHQQTH). A C2H2-type 3; degenerate zinc finger spans residues 283-305 (YECVECEKPSISKSDLMLQCKMP). C2H2-type zinc fingers lie at residues 311 to 333 (YACN…QRIH), 339 to 361 (YGCN…ERTH), 367 to 389 (YKCI…HRTH), 395 to 417 (YQCS…HRTH), 423 to 445 (YACD…QRTH), 451 to 473 (YECN…QRTH), 479 to 501 (YECN…QWTH), 507 to 529 (YECN…QRTH), 535 to 557 (YACN…HRTH), 563 to 585 (YECN…QRTH), 591 to 613 (YECN…KRTH), and 619 to 641 (YECN…QGTH). The C2H2-type 16; degenerate zinc finger occupies 649 to 669 (CNECGKTFHRKSFLTIHQRTH). Residues 741 to 752 (QKSVLTVHHRTH) form a C2H2-type 17; degenerate zinc finger. 5 consecutive C2H2-type zinc fingers follow at residues 758–780 (YECN…QGTH), 786–808 (YECD…QRTH), 814–836 (FECK…HRTH), 842–864 (FRCN…QRTH), and 870–892 (YECK…QQTH).

Belongs to the krueppel C2H2-type zinc-finger protein family.

The protein localises to the nucleus. Functionally, may be involved in transcriptional regulation. This Homo sapiens (Human) protein is Zinc finger protein 717.